We begin with the raw amino-acid sequence, 103 residues long: Large ribosomal subunit protein bL21 (103 aa).

This sequence belongs to the bacterial ribosomal protein bL21 family. In terms of assembly, part of the 50S ribosomal subunit. Contacts protein L20.

Functionally, this protein binds to 23S rRNA in the presence of protein L20. The protein is Large ribosomal subunit protein bL21 of Methylococcus capsulatus (strain ATCC 33009 / NCIMB 11132 / Bath).